A 476-amino-acid polypeptide reads, in one-letter code: NADH-quinone oxidoreductase subunit N (476 aa).

Helical transmembrane passes span 5 to 25 (LALI…LMLG), 38 to 58 (LSAL…FGVE), 70 to 90 (AFGG…ILVA), 97 to 117 (GMRA…GIMA), 122 to 142 (LMTL…LASF), 157 to 177 (FVLG…LYGF), 196 to 218 (IGLI…AVPF), 231 to 253 (TPVT…ARIV), 264 to 284 (WQQI…VGAI), 292 to 312 (LLAY…AAGT), 318 to 338 (GVLT…LVVL), 364 to 384 (LAAA…LFGF), 401 to 421 (PLAV…IAII), and 445 to 465 (IVAA…PALA).

This sequence belongs to the complex I subunit 2 family. As to quaternary structure, NDH-1 is composed of 14 different subunits. Subunits NuoA, H, J, K, L, M, N constitute the membrane sector of the complex.

The protein resides in the cell inner membrane. It carries out the reaction a quinone + NADH + 5 H(+)(in) = a quinol + NAD(+) + 4 H(+)(out). NDH-1 shuttles electrons from NADH, via FMN and iron-sulfur (Fe-S) centers, to quinones in the respiratory chain. The immediate electron acceptor for the enzyme in this species is believed to be ubiquinone. Couples the redox reaction to proton translocation (for every two electrons transferred, four hydrogen ions are translocated across the cytoplasmic membrane), and thus conserves the redox energy in a proton gradient. This chain is NADH-quinone oxidoreductase subunit N, found in Sphingopyxis alaskensis (strain DSM 13593 / LMG 18877 / RB2256) (Sphingomonas alaskensis).